A 152-amino-acid polypeptide reads, in one-letter code: uncharacterized protein (152 aa).

The Cytoplasmic segment spans residues 1-5 (MWFPQ). Residues 6–26 (IIAGMAAGGAASAMTPGKVLF) traverse the membrane as a helical segment. Topologically, residues 27–38 (TNALGLGCSRSR) are extracellular. The chain crosses the membrane as a helical span at residues 39–59 (GLFLEMFGTAVLCLTVLMTAV). The Cytoplasmic portion of the chain corresponds to 60–65 (EKRETN). The chain crosses the membrane as a helical span at residues 66-86 (FMAALPIGISLFMAHMALTGY). The Extracellular segment spans residues 87 to 110 (TGTGVNPARSLGAAVAARYFPHYH). Positions 92–94 (NPA) match the NPA motif. The chain crosses the membrane as a helical span at residues 111–131 (WIYWISPLLGAFLAWSVWQLL). Over 132-152 (QILDYTTYVNAEKAAGQKKED) the chain is Cytoplasmic.

It belongs to the MIP/aquaporin (TC 1.A.8) family.

Its subcellular location is the membrane. This is an uncharacterized protein from Saccharomyces cerevisiae (strain RM11-1a) (Baker's yeast).